The chain runs to 921 residues: Protein translocase subunit SecA (921 aa).

ATP contacts are provided by residues Gln85, 103–107 (GEGKT), and Asp514. Residues Cys905, Cys907, Cys916, and His917 each contribute to the Zn(2+) site.

Belongs to the SecA family. Monomer and homodimer. Part of the essential Sec protein translocation apparatus which comprises SecA, SecYEG and auxiliary proteins SecDF-YajC and YidC. Zn(2+) serves as cofactor.

It localises to the cell inner membrane. The protein localises to the cytoplasm. The enzyme catalyses ATP + H2O + cellular proteinSide 1 = ADP + phosphate + cellular proteinSide 2.. Part of the Sec protein translocase complex. Interacts with the SecYEG preprotein conducting channel. Has a central role in coupling the hydrolysis of ATP to the transfer of proteins into and across the cell membrane, serving both as a receptor for the preprotein-SecB complex and as an ATP-driven molecular motor driving the stepwise translocation of polypeptide chains across the membrane. The polypeptide is Protein translocase subunit SecA (Herminiimonas arsenicoxydans).